A 941-amino-acid chain; its full sequence is MVIIGPRGPGSQRLLLSLLLLAAWEVGSGQLHYSVYEEAKHGTFVGRIAQDLGLELAELVPRLFRVASKRHGDLLEVNLQNGILFVNSRIDREKLCGRSAECSIHLEVIVDRPLQVFHVDVEVKDINDNPPVFREREQKVPVSESAPLDSHFPLEGASDADIGVNSLLTYALSLNEHFELKIKTKKDKSILPELVLRKLLDREQTPKLNLLLMVIDGGKPELTGSVQIQITVLDVNDNGPAFDKPSYKVVLSENVQNDTRVIQLNASDPDEGLNGEISYGIKMILPVSEKCMFSINPDTGEIRIYGELDFEENNAYEIQVNAIDKGIPSMAGHSMVLVEVLDVNDNVPEVMVTSLSLPVQEDAQVGTVIALISVSDRDSGANGQVICSLTPHVPFKLVSTYKNYYSLVLDSALDRESVSAYELVVTARDGGSPSLWATARVSVEVADVNDNAPAFAQPEYTVFVKENNPPGCHIFTVSAWDADAQKNALVSYSLVERRVGEHALSSYVSVHAESGKVYALQPLDHEELELLQFQVSARDAGVPPLGSNVTLQVFVLDENDNAPALLATPAGSAGGAVSELVPRSVGAGHVVAKVRAVDADSGYNAWLSYELQPAAVGAHIPFHVGLYTGEISTTRILDEADAPRHRLLVLVKDHGEPALTSTATVLVSLVENGQAPKTSSRASVGAVDPEAALVDINVYLIIAICAVSSLLVLTLLLYTALRCSAPPTVSRCAPGKPTLVCSSAVGSWSYSQQRRQRVCSGESPPKTDLMAFSPSLQLSREDCLNPPSEPRQPNPDWRYSASLRAGMHSSVHLEEAGILRAGPGGPDQQWPTVSSATPEPEAGEVSPPVGAGVNSNSWTFKYGPGNPKQSGPGELPDKFIIPGSPAIISIRQEPANSQIDKSDFITFGKKEETKKKKKKKKGNKTQEKKEKGNSTTDNSDQ.

A signal peptide spans 1–29; sequence MVIIGPRGPGSQRLLLSLLLLAAWEVGSG. Cadherin domains are found at residues 30–133, 134–242, 243–350, 351–455, 456–565, and 581–678; these read QLHY…PPVF, RERE…GPAF, DKPS…VPEV, MVTS…APAF, AQPE…APAL, and VPRS…APKT. Topologically, residues 30 to 697 are extracellular; the sequence is QLHYSVYEEA…DPEAALVDIN (668 aa). N-linked (GlcNAc...) asparagine glycosylation is found at asparagine 257 and asparagine 265. Asparagine 548 is a glycosylation site (N-linked (GlcNAc...) asparagine). A helical transmembrane segment spans residues 698–718; it reads VYLIIAICAVSSLLVLTLLLY. The Cytoplasmic segment spans residues 719-941; the sequence is TALRCSAPPT…GNSTTDNSDQ (223 aa). PXXP repeat units follow at residues 734 to 737, 790 to 793, 823 to 826, 863 to 866, and 882 to 885; these read PGKP, PRQP, PGGP, GPGN, and PGSP. A 5 X 4 AA repeats of P-X-X-P region spans residues 734 to 885; it reads PGKPTLVCSS…PDKFIIPGSP (152 aa). A disordered region spans residues 818-941; sequence ILRAGPGGPD…GNSTTDNSDQ (124 aa). Positions 900–914 are enriched in basic and acidic residues; that stretch reads DKSDFITFGKKEETK.

Its subcellular location is the cell membrane. Potential calcium-dependent cell-adhesion protein. May be involved in the establishment and maintenance of specific neuronal connections in the brain. The polypeptide is Protocadherin alpha-12 (PCDHA12) (Pan troglodytes (Chimpanzee)).